The sequence spans 161 residues: Nucleotide-binding protein Pcar_0033 (161 aa).

It belongs to the YajQ family.

Nucleotide-binding protein. This Syntrophotalea carbinolica (strain DSM 2380 / NBRC 103641 / GraBd1) (Pelobacter carbinolicus) protein is Nucleotide-binding protein Pcar_0033.